The primary structure comprises 71 residues: uncharacterized protein (71 aa).

The protein resides in the plastid. The protein localises to the chloroplast. This is an uncharacterized protein from Mesostigma viride (Green alga).